The following is a 249-amino-acid chain: 2,3-bisphosphoglycerate-dependent phosphoglycerate mutase (249 aa).

Substrate is bound by residues 8–15 (RHGESTWN), 21–22 (TG), Arg-60, 87–90 (ERHY), Lys-98, 114–115 (RR), and 183–184 (GN). His-9 (tele-phosphohistidine intermediate) is an active-site residue. Glu-87 functions as the Proton donor/acceptor in the catalytic mechanism.

The protein belongs to the phosphoglycerate mutase family. BPG-dependent PGAM subfamily. Homodimer.

It catalyses the reaction (2R)-2-phosphoglycerate = (2R)-3-phosphoglycerate. Its pathway is carbohydrate degradation; glycolysis; pyruvate from D-glyceraldehyde 3-phosphate: step 3/5. Its function is as follows. Catalyzes the interconversion of 2-phosphoglycerate and 3-phosphoglycerate. In Burkholderia mallei (strain NCTC 10247), this protein is 2,3-bisphosphoglycerate-dependent phosphoglycerate mutase.